Here is a 236-residue protein sequence, read N- to C-terminus: Purine nucleoside phosphorylase DeoD-type (236 aa).

Histidine 5 serves as a coordination point for a purine D-ribonucleoside. Phosphate-binding positions include glycine 21, arginine 25, arginine 44, and 88 to 91; that span reads RVGT. Residues 180-182 and 204-205 each bind a purine D-ribonucleoside; these read EME and SD. Aspartate 205 serves as the catalytic Proton donor.

It belongs to the PNP/UDP phosphorylase family. In terms of assembly, homohexamer; trimer of homodimers.

It catalyses the reaction a purine D-ribonucleoside + phosphate = a purine nucleobase + alpha-D-ribose 1-phosphate. It carries out the reaction a purine 2'-deoxy-D-ribonucleoside + phosphate = a purine nucleobase + 2-deoxy-alpha-D-ribose 1-phosphate. Catalyzes the reversible phosphorolytic breakdown of the N-glycosidic bond in the beta-(deoxy)ribonucleoside molecules, with the formation of the corresponding free purine bases and pentose-1-phosphate. The sequence is that of Purine nucleoside phosphorylase DeoD-type from Shewanella denitrificans (strain OS217 / ATCC BAA-1090 / DSM 15013).